The following is a 696-amino-acid chain: Catalase (696 aa).

Active-site residues include His-64 and Asn-137. Residues 187–211 form a disordered region; that stretch reads SLAQGSQISSERGSPKAYSNTEPNK. Polar residues predominate over residues 189-208; it reads AQGSQISSERGSPKAYSNTE. Tyr-353 provides a ligand contact to heme.

Belongs to the catalase family. It depends on heme as a cofactor.

It catalyses the reaction 2 H2O2 = O2 + 2 H2O. Functionally, occurs in almost all aerobically respiring organisms and serves to protect cells from the toxic effects of hydrogen peroxide. This chain is Catalase, found in Penicillium janthinellum (Penicillium vitale).